The following is a 51-amino-acid chain: VAPPQHLCGSHLVDALYLVCGDRGFFYNPKGIVEQCCHKPCNIFDLQNYCN.

Disulfide bonds link C8–C37, C20–C50, and C36–C41.

Belongs to the insulin family. Heterodimer of a B chain and an A chain linked by two disulfide bonds.

The protein resides in the secreted. Functionally, insulin decreases blood glucose concentration. It increases cell permeability to monosaccharides, amino acids and fatty acids. It accelerates glycolysis, the pentose phosphate cycle, and glycogen synthesis in liver. This chain is Insulin, found in Seriola quinqueradiata (Five-ray yellowtail).